The following is a 223-amino-acid chain: Type III pantothenate kinase (223 aa).

Residue 17–24 participates in ATP binding; that stretch reads DIGNTRIH. Residues tyrosine 81 and 85–88 each bind substrate; that span reads GIDR. Aspartate 87 acts as the Proton acceptor in catalysis. Aspartate 102 serves as a coordination point for K(+). Serine 105 provides a ligand contact to ATP. Threonine 157 contributes to the substrate binding site.

Belongs to the type III pantothenate kinase family. As to quaternary structure, homodimer. NH4(+) is required as a cofactor. K(+) serves as cofactor.

Its subcellular location is the cytoplasm. The catalysed reaction is (R)-pantothenate + ATP = (R)-4'-phosphopantothenate + ADP + H(+). It functions in the pathway cofactor biosynthesis; coenzyme A biosynthesis; CoA from (R)-pantothenate: step 1/5. With respect to regulation, not regulated by feedback inhibition by CoA and its thioesters as described for many other pantothenate kinases. Not inhibited by N-pentylpantothenamide (N5-Pan), and this compound cannot act as a substrate either. Its function is as follows. Catalyzes the phosphorylation of pantothenate (Pan), the first step in CoA biosynthesis. Can also utilize CTP or GTP instead of ATP as a phosphoryl donor, albeit to a lesser extent. This chain is Type III pantothenate kinase (coaX), found in Helicobacter pylori (strain ATCC 700392 / 26695) (Campylobacter pylori).